Consider the following 503-residue polypeptide: Probable cytosol aminopeptidase (503 aa).

Mn(2+) is bound by residues lysine 268 and aspartate 273. The active site involves lysine 280. Mn(2+) is bound by residues aspartate 291, aspartate 350, and glutamate 352. Residue arginine 354 is part of the active site.

Belongs to the peptidase M17 family. Mn(2+) is required as a cofactor.

Its subcellular location is the cytoplasm. It catalyses the reaction Release of an N-terminal amino acid, Xaa-|-Yaa-, in which Xaa is preferably Leu, but may be other amino acids including Pro although not Arg or Lys, and Yaa may be Pro. Amino acid amides and methyl esters are also readily hydrolyzed, but rates on arylamides are exceedingly low.. The catalysed reaction is Release of an N-terminal amino acid, preferentially leucine, but not glutamic or aspartic acids.. Presumably involved in the processing and regular turnover of intracellular proteins. Catalyzes the removal of unsubstituted N-terminal amino acids from various peptides. The protein is Probable cytosol aminopeptidase of Corynebacterium efficiens (strain DSM 44549 / YS-314 / AJ 12310 / JCM 11189 / NBRC 100395).